Consider the following 329-residue polypeptide: Protein Brevis radix-like 4 (329 aa).

The interval 12-37 (SGTSRHHGQQRRGGSPPPRGRTTSVY) is disordered. A BRX 1 domain is found at 86–142 (REWVAQVEPGVQITFVSLAGGGGNDLKRIRFSREMYDKWQAQKWWGENNERIMELYN). The interval 151–263 (LPTPPRSDDG…TTSCSSRDEV (113 aa)) is disordered. Low complexity-rich tracts occupy residues 222–236 (SNPS…QQPQ) and 243–252 (AAASDAMDAA). Positions 253-263 (RTTSCSSRDEV) are enriched in polar residues. The BRX 2 domain maps to 274–329 (TEWVIQDEPGVYITVRELADGTRELRRVRFSRERFAELNAKLWWEENKERIQAQYL).

The protein belongs to the BRX family.

The protein resides in the nucleus. The chain is Protein Brevis radix-like 4 (BRXL4) from Oryza sativa subsp. japonica (Rice).